The chain runs to 472 residues: Serine incorporator 3 (472 aa).

Residues 1–95 (MGAVLGVFSL…KECDVLVRYK (95 aa)) are Extracellular-facing. N-linked (GlcNAc...) asparagine glycosylation occurs at Asn34. Residues 96–116 (AVYRISFALAVFFFAFSLLML) traverse the membrane as a helical segment. Over 117-131 (NVKTSKDPRAAIHNG) the chain is Cytoplasmic. A helical transmembrane segment spans residues 132-152 (FWFFKIAAIVGVMVGSFYIPG). At 153 to 158 (GHFNTA) the chain is on the extracellular side. The chain crosses the membrane as a helical span at residues 159–179 (WFVIGMVGAAFFILIQLVLLV). At 180–202 (DFAHSWNESWVNRMEEGNPKCWY) the chain is on the cytoplasmic side. A helical membrane pass occupies residues 203–223 (AALLSVTSLFYILSIIFAGLL). Residues 224-238 (YTYYTKPDGCTENKF) lie on the Extracellular side of the membrane. The helical transmembrane segment at 239-259 (FISFNLILCVVISVLSIHPKI) threads the bilayer. Topologically, residues 260 to 328 (QEHQPRSGLL…APTPAVPLQS (69 aa)) are cytoplasmic. Residues 329 to 349 (GPSLNKENFIGLLVFVLSLSY) form a helical membrane-spanning segment. Residues 350-405 (SSIRNSSNSQVSKLTLSGSDSVILRDTAANGASDEEDGRPRRAVDNEREGVQYNYS) lie on the Extracellular side of the membrane. A glycan (N-linked (GlcNAc...) asparagine) is linked at Asn354. The residue at position 370 (Ser370) is a Phosphoserine. Residue Asn403 is glycosylated (N-linked (GlcNAc...) asparagine). The chain crosses the membrane as a helical span at residues 406-426 (MFHLMLCSASLYIMMTLTNWY). At 427-445 (SPDANFQSMTSKWPAVWVK) the chain is on the cytoplasmic side. A helical membrane pass occupies residues 446-466 (ISSSWVCLLLYVWTLVAPLVL). The Extracellular segment spans residues 467-472 (TNRDFS).

Belongs to the TDE1 family. Post-translationally, N-glycosylated.

It localises to the cell membrane. The protein resides in the golgi apparatus membrane. The catalysed reaction is a 1,2-diacyl-sn-glycero-3-phospho-L-serine(in) = a 1,2-diacyl-sn-glycero-3-phospho-L-serine(out). The enzyme catalyses a 1,2-diacyl-sn-glycero-3-phosphocholine(in) = a 1,2-diacyl-sn-glycero-3-phosphocholine(out). It carries out the reaction a 1,2-diacyl-sn-glycero-3-phosphoethanolamine(in) = a 1,2-diacyl-sn-glycero-3-phosphoethanolamine(out). Restriction factor required to restrict infectivity of gammaretroviruses: acts by inhibiting an early step of viral infection. Impairs the penetration of the viral particle into the cytoplasm. Non-ATP-dependent, non-specific lipid transporter for phosphatidylserine, phosphatidylcholine, and phosphatidylethanolamine. Functions as a scramblase that flips lipids in both directions across the membrane. Phospholipid scrambling results in gammaretroviral surface exposure of phosphatidylserine and loss of membrane asymmetry, which leads to loss of infectivity. The chain is Serine incorporator 3 (SERINC3) from Bos taurus (Bovine).